Here is a 269-residue protein sequence, read N- to C-terminus: Formamidopyrimidine-DNA glycosylase (269 aa).

Proline 2 serves as the catalytic Schiff-base intermediate with DNA. The Proton donor role is filled by glutamate 3. Lysine 57 serves as the catalytic Proton donor; for beta-elimination activity. DNA-binding residues include histidine 90, arginine 109, and lysine 150. The FPG-type zinc-finger motif lies at glutamine 235 to lysine 269. The Proton donor; for delta-elimination activity role is filled by arginine 259.

It belongs to the FPG family. As to quaternary structure, monomer. Requires Zn(2+) as cofactor.

The catalysed reaction is Hydrolysis of DNA containing ring-opened 7-methylguanine residues, releasing 2,6-diamino-4-hydroxy-5-(N-methyl)formamidopyrimidine.. The enzyme catalyses 2'-deoxyribonucleotide-(2'-deoxyribose 5'-phosphate)-2'-deoxyribonucleotide-DNA = a 3'-end 2'-deoxyribonucleotide-(2,3-dehydro-2,3-deoxyribose 5'-phosphate)-DNA + a 5'-end 5'-phospho-2'-deoxyribonucleoside-DNA + H(+). Functionally, involved in base excision repair of DNA damaged by oxidation or by mutagenic agents. Acts as a DNA glycosylase that recognizes and removes damaged bases. Has a preference for oxidized purines, such as 7,8-dihydro-8-oxoguanine (8-oxoG). Has AP (apurinic/apyrimidinic) lyase activity and introduces nicks in the DNA strand. Cleaves the DNA backbone by beta-delta elimination to generate a single-strand break at the site of the removed base with both 3'- and 5'-phosphates. This is Formamidopyrimidine-DNA glycosylase from Salmonella agona (strain SL483).